The primary structure comprises 202 residues: Large ribosomal subunit protein uL13 (202 aa).

This sequence belongs to the universal ribosomal protein uL13 family.

The sequence is that of Large ribosomal subunit protein uL13 from Caenorhabditis elegans.